Here is a 177-residue protein sequence, read N- to C-terminus: Ribosome maturation factor RimM (177 aa).

In terms of domain architecture, PRC barrel spans 98-177 (DDGYYWKDLM…TIEVDWDPGF (80 aa)).

The protein belongs to the RimM family. As to quaternary structure, binds ribosomal protein uS19.

It localises to the cytoplasm. Functionally, an accessory protein needed during the final step in the assembly of 30S ribosomal subunit, possibly for assembly of the head region. Essential for efficient processing of 16S rRNA. May be needed both before and after RbfA during the maturation of 16S rRNA. It has affinity for free ribosomal 30S subunits but not for 70S ribosomes. The chain is Ribosome maturation factor RimM from Enterobacter sp. (strain 638).